The following is a 328-amino-acid chain: Methionyl-tRNA formyltransferase (328 aa).

110–113 contributes to the (6S)-5,6,7,8-tetrahydrofolate binding site; the sequence is SNLP.

This sequence belongs to the Fmt family.

The enzyme catalyses L-methionyl-tRNA(fMet) + (6R)-10-formyltetrahydrofolate = N-formyl-L-methionyl-tRNA(fMet) + (6S)-5,6,7,8-tetrahydrofolate + H(+). Its function is as follows. Attaches a formyl group to the free amino group of methionyl-tRNA(fMet). The formyl group appears to play a dual role in the initiator identity of N-formylmethionyl-tRNA by promoting its recognition by IF2 and preventing the misappropriation of this tRNA by the elongation apparatus. The chain is Methionyl-tRNA formyltransferase from Bifidobacterium longum (strain DJO10A).